Here is a 1433-residue protein sequence, read N- to C-terminus: DNA-directed RNA polymerase subunit beta' (1433 aa).

Zn(2+) contacts are provided by Cys66, Cys68, Cys81, and Cys84. Asp473, Asp475, and Asp477 together coordinate Mg(2+). Positions 815, 889, 896, and 899 each coordinate Zn(2+).

It belongs to the RNA polymerase beta' chain family. In terms of assembly, the RNAP catalytic core consists of 2 alpha, 1 beta, 1 beta' and 1 omega subunit. When a sigma factor is associated with the core the holoenzyme is formed, which can initiate transcription. It depends on Mg(2+) as a cofactor. The cofactor is Zn(2+).

The catalysed reaction is RNA(n) + a ribonucleoside 5'-triphosphate = RNA(n+1) + diphosphate. Functionally, DNA-dependent RNA polymerase catalyzes the transcription of DNA into RNA using the four ribonucleoside triphosphates as substrates. This is DNA-directed RNA polymerase subunit beta' from Porphyromonas gingivalis (strain ATCC 33277 / DSM 20709 / CIP 103683 / JCM 12257 / NCTC 11834 / 2561).